A 343-amino-acid polypeptide reads, in one-letter code: CRISPR-associated endonuclease Cas1 1 (343 aa).

3 residues coordinate Mn(2+): Glu166, His234, and Glu249.

Belongs to the CRISPR-associated endonuclease Cas1 family. As to quaternary structure, homodimer, forms a heterotetramer with a Cas2 homodimer. Mg(2+) serves as cofactor. It depends on Mn(2+) as a cofactor.

Its function is as follows. CRISPR (clustered regularly interspaced short palindromic repeat), is an adaptive immune system that provides protection against mobile genetic elements (viruses, transposable elements and conjugative plasmids). CRISPR clusters contain spacers, sequences complementary to antecedent mobile elements, and target invading nucleic acids. CRISPR clusters are transcribed and processed into CRISPR RNA (crRNA). Acts as a dsDNA endonuclease. Involved in the integration of spacer DNA into the CRISPR cassette. This Chlorobaculum tepidum (strain ATCC 49652 / DSM 12025 / NBRC 103806 / TLS) (Chlorobium tepidum) protein is CRISPR-associated endonuclease Cas1 1.